A 346-amino-acid polypeptide reads, in one-letter code: Phosphoribosylformylglycinamidine cyclo-ligase (346 aa).

It belongs to the AIR synthase family.

It is found in the cytoplasm. It catalyses the reaction 2-formamido-N(1)-(5-O-phospho-beta-D-ribosyl)acetamidine + ATP = 5-amino-1-(5-phospho-beta-D-ribosyl)imidazole + ADP + phosphate + H(+). It functions in the pathway purine metabolism; IMP biosynthesis via de novo pathway; 5-amino-1-(5-phospho-D-ribosyl)imidazole from N(2)-formyl-N(1)-(5-phospho-D-ribosyl)glycinamide: step 2/2. The polypeptide is Phosphoribosylformylglycinamidine cyclo-ligase (Aliivibrio fischeri (strain ATCC 700601 / ES114) (Vibrio fischeri)).